Here is a 439-residue protein sequence, read N- to C-terminus: Dihydroorotase (439 aa).

Zn(2+)-binding residues include histidine 65 and histidine 67. Substrate-binding positions include histidine 67 to arginine 69 and asparagine 99. Positions 156, 183, 246, and 321 each coordinate Zn(2+). The active site involves aspartate 321. Substrate is bound by residues histidine 325 and phenylalanine 339–glycine 340.

This sequence belongs to the metallo-dependent hydrolases superfamily. DHOase family. Class I DHOase subfamily. The cofactor is Zn(2+).

The enzyme catalyses (S)-dihydroorotate + H2O = N-carbamoyl-L-aspartate + H(+). Its pathway is pyrimidine metabolism; UMP biosynthesis via de novo pathway; (S)-dihydroorotate from bicarbonate: step 3/3. Its function is as follows. Catalyzes the reversible cyclization of carbamoyl aspartate to dihydroorotate. The chain is Dihydroorotase from Chlorobaculum tepidum (strain ATCC 49652 / DSM 12025 / NBRC 103806 / TLS) (Chlorobium tepidum).